Here is an 831-residue protein sequence, read N- to C-terminus: Prickle-like protein 1 (831 aa).

Residues 14–122 (FGCQRSSTSD…TIKLLSRAMM (109 aa)) enclose the PET domain. LIM zinc-binding domains follow at residues 124-189 (AVCE…LLKP), 189-249 (PRCS…LYAE), and 249-313 (EYCE…EDIH). The disordered stretch occupies residues 314–346 (ASDSSDSAFQSARSRDSRRSVRMGRSSRSADQC). Phosphoserine occurs at positions 315, 591, and 594. Disordered stretches follow at residues 664-688 (EERG…NALN) and 763-831 (CSSS…CIIS). A compositionally biased stretch (basic residues) spans 669–680 (RPHHHRHRRSRK). At serine 683 the chain carries Phosphoserine. The segment covering 797–812 (DLSSPASALPTPQFNQ) has biased composition (polar residues). The span at 815-831 (TKSKKKKGHRGKNCIIS) shows a compositional bias: basic residues. Cysteine 828 is subject to Cysteine methyl ester. Cysteine 828 carries the S-farnesyl cysteine lipid modification. Positions 829 to 831 (IIS) are cleaved as a propeptide — removed in mature form.

It belongs to the prickle / espinas / testin family. Interacts with REST.

It localises to the nucleus membrane. The protein localises to the cytoplasm. It is found in the cytosol. Involved in the planar cell polarity pathway that controls convergent extension during gastrulation and neural tube closure. Convergent extension is a complex morphogenetic process during which cells elongate, move mediolaterally, and intercalate between neighboring cells, leading to convergence toward the mediolateral axis and extension along the anteroposterior axis. Necessary for nuclear localization of REST. May serve as nuclear receptor. This Rattus norvegicus (Rat) protein is Prickle-like protein 1 (Prickle1).